The primary structure comprises 60 residues: Cytotoxin SP15d (60 aa).

4 disulfides stabilise this stretch: cysteine 3-cysteine 21, cysteine 14-cysteine 38, cysteine 42-cysteine 53, and cysteine 54-cysteine 59.

It belongs to the three-finger toxin family. Short-chain subfamily. Type IA cytotoxin sub-subfamily. In terms of assembly, monomer in solution; Homodimer and oligomer in the presence of negatively charged lipids forming a pore with a size ranging between 20 and 30 Angstroms. In terms of tissue distribution, expressed by the venom gland.

The protein resides in the secreted. It is found in the target cell membrane. Shows cytolytic activity on many different cells by forming pore in lipid membranes. In vivo, increases heart rate or kills the animal by cardiac arrest. In addition, it binds to heparin with high affinity, interacts with Kv channel-interacting protein 1 (KCNIP1) in a calcium-independent manner, and binds to integrin alpha-V/beta-3 (ITGAV/ITGB3) with moderate affinity. The polypeptide is Cytotoxin SP15d (Naja atra (Chinese cobra)).